The sequence spans 305 residues: D-alanine--D-alanine ligase (305 aa).

The ATP-grasp domain occupies 99 to 300 (KLFFEKAGIR…YEEMIQTFVN (202 aa)). 126 to 181 (NFTGTYPVVVKPNQEGSTIGLTVAETEEELLQGIEEAFRHDDTILIEEFIAGTEVT) serves as a coordination point for ATP.

It belongs to the D-alanine--D-alanine ligase family.

The protein resides in the cytoplasm. It catalyses the reaction 2 D-alanine + ATP = D-alanyl-D-alanine + ADP + phosphate + H(+). It participates in cell wall biogenesis; peptidoglycan biosynthesis. Cell wall formation. The chain is D-alanine--D-alanine ligase from Halalkalibacterium halodurans (strain ATCC BAA-125 / DSM 18197 / FERM 7344 / JCM 9153 / C-125) (Bacillus halodurans).